The following is a 166-amino-acid chain: Small ribosomal subunit protein bS6 (166 aa).

Composition is skewed to basic and acidic residues over residues 96–142 and 149–166; these read HEEG…DRPP and GGDR…GGAE. Residues 96–166 form a disordered region; the sequence is HEEGPSAMMQ…PREGFEGGAE (71 aa).

Belongs to the bacterial ribosomal protein bS6 family.

Its function is as follows. Binds together with bS18 to 16S ribosomal RNA. The sequence is that of Small ribosomal subunit protein bS6 from Mesorhizobium japonicum (strain LMG 29417 / CECT 9101 / MAFF 303099) (Mesorhizobium loti (strain MAFF 303099)).